An 807-amino-acid polypeptide reads, in one-letter code: Glycerol-3-phosphate acyltransferase (807 aa).

The HXXXXD motif signature appears at C308–M313.

The protein belongs to the GPAT/DAPAT family.

The protein resides in the cell inner membrane. It carries out the reaction sn-glycerol 3-phosphate + an acyl-CoA = a 1-acyl-sn-glycero-3-phosphate + CoA. The protein operates within phospholipid metabolism; CDP-diacylglycerol biosynthesis; CDP-diacylglycerol from sn-glycerol 3-phosphate: step 1/3. This chain is Glycerol-3-phosphate acyltransferase, found in Shewanella sp. (strain MR-7).